The primary structure comprises 80 residues: Secreted transmembrane peptide 3 (80 aa).

An N-terminal signal peptide occupies residues Met-1–Gly-27. The segment at Ile-44–Ser-80 is disordered. The SCOOP motif motif lies at Pro-62–Ser-80. A compositionally biased stretch (basic residues) spans Pro-70 to Ser-80.

It belongs to the serine rich endogenous peptide (SCOOP) phytocytokine family. Interacts with MIK2 (via extracellular leucine-rich repeat domain); this interaction triggers the formation of complex between MIK2 and the BAK1/SERK3 and SERK4 coreceptors, and subsequent BAK1 activation by phosphorylation. Mostly expressed in leaves, and, to a lower extent, in roots, stems, siliques, seeds and flowers.

The protein localises to the cell membrane. It is found in the secreted. Its subcellular location is the extracellular space. It localises to the apoplast. The protein resides in the endoplasmic reticulum. The protein localises to the golgi apparatus. Brassicaceae-specific phytocytokine (plant endogenous peptide released into the apoplast) perceived by MIK2 in a BAK1/SERK3 and SERK4 coreceptors-dependent manner, that modulates various physiological and antimicrobial processes including growth prevention and reactive oxygen species (ROS) response regulation. The polypeptide is Secreted transmembrane peptide 3 (Arabidopsis thaliana (Mouse-ear cress)).